Consider the following 186-residue polypeptide: Ribosome-recycling factor (186 aa).

The protein belongs to the RRF family.

Its subcellular location is the cytoplasm. Its function is as follows. Responsible for the release of ribosomes from messenger RNA at the termination of protein biosynthesis. May increase the efficiency of translation by recycling ribosomes from one round of translation to another. The sequence is that of Ribosome-recycling factor from Paraburkholderia phymatum (strain DSM 17167 / CIP 108236 / LMG 21445 / STM815) (Burkholderia phymatum).